A 296-amino-acid chain; its full sequence is 33 kDa chaperonin (296 aa).

Cystine bridges form between Cys-236/Cys-238 and Cys-269/Cys-272.

This sequence belongs to the HSP33 family. In terms of processing, under oxidizing conditions two disulfide bonds are formed involving the reactive cysteines. Under reducing conditions zinc is bound to the reactive cysteines and the protein is inactive.

The protein localises to the cytoplasm. Functionally, redox regulated molecular chaperone. Protects both thermally unfolding and oxidatively damaged proteins from irreversible aggregation. Plays an important role in the bacterial defense system toward oxidative stress. This is 33 kDa chaperonin from Lactobacillus helveticus (strain DPC 4571).